Consider the following 516-residue polypeptide: Cytochrome P450 1A1 (516 aa).

Positions 33-44 (WQPRVPKGLKSP) are mitochondrial targeting signal. O-linked (GlcNAc) serine glycosylation is present at S71. F228 provides a ligand contact to substrate. C461 is a heme binding site.

The protein belongs to the cytochrome P450 family. In terms of assembly, interacts with cytosolic chaperones HSP70 and HSP90; this interaction is required for initial targeting to mitochondria. Interacts (via mitochondrial targeting signal) with TOMM40 (via N-terminus); this interaction is required for translocation across the mitochondrial outer membrane. Heme serves as cofactor.

It localises to the endoplasmic reticulum membrane. The protein localises to the mitochondrion inner membrane. Its subcellular location is the microsome membrane. The protein resides in the cytoplasm. It catalyses the reaction an organic molecule + reduced [NADPH--hemoprotein reductase] + O2 = an alcohol + oxidized [NADPH--hemoprotein reductase] + H2O + H(+). The enzyme catalyses estrone + reduced [NADPH--hemoprotein reductase] + O2 = 2-hydroxyestrone + oxidized [NADPH--hemoprotein reductase] + H2O + H(+). The catalysed reaction is estrone + reduced [NADPH--hemoprotein reductase] + O2 = 4-hydroxyestrone + oxidized [NADPH--hemoprotein reductase] + H2O + H(+). It carries out the reaction estrone + reduced [NADPH--hemoprotein reductase] + O2 = 6alpha-hydroxyestrone + oxidized [NADPH--hemoprotein reductase] + H2O + H(+). It catalyses the reaction estrone + reduced [NADPH--hemoprotein reductase] + O2 = 15alpha-hydroxyestrone + oxidized [NADPH--hemoprotein reductase] + H2O + H(+). The enzyme catalyses estrone + reduced [NADPH--hemoprotein reductase] + O2 = 16alpha-hydroxyestrone + oxidized [NADPH--hemoprotein reductase] + H2O + H(+). The catalysed reaction is 17beta-estradiol + reduced [NADPH--hemoprotein reductase] + O2 = 2-hydroxy-17beta-estradiol + oxidized [NADPH--hemoprotein reductase] + H2O + H(+). It carries out the reaction 17beta-estradiol + reduced [NADPH--hemoprotein reductase] + O2 = 4-hydroxy-17beta-estradiol + oxidized [NADPH--hemoprotein reductase] + H2O + H(+). It catalyses the reaction 17beta-estradiol + reduced [NADPH--hemoprotein reductase] + O2 = 6alpha-hydroxy-17beta-estradiol + oxidized [NADPH--hemoprotein reductase] + H2O + H(+). The enzyme catalyses 17beta-estradiol + reduced [NADPH--hemoprotein reductase] + O2 = 7alpha-hydroxy-17beta-estradiol + oxidized [NADPH--hemoprotein reductase] + H2O + H(+). The catalysed reaction is 17beta-estradiol + reduced [NADPH--hemoprotein reductase] + O2 = 15alpha-hydroxy-17beta-estradiol + oxidized [NADPH--hemoprotein reductase] + H2O + H(+). It carries out the reaction (5Z,8Z,11Z)-eicosatrienoate + reduced [NADPH--hemoprotein reductase] + O2 = 19-hydroxy-(5Z,8Z,11Z)-eicosatrienoate + oxidized [NADPH--hemoprotein reductase] + H2O + H(+). It catalyses the reaction (5Z,8Z,11Z,14Z)-eicosatetraenoate + reduced [NADPH--hemoprotein reductase] + O2 = 16-hydroxy-(5Z,8Z,11Z,14Z)-eicosatetraenoate + oxidized [NADPH--hemoprotein reductase] + H2O + H(+). The enzyme catalyses (5Z,8Z,11Z,14Z)-eicosatetraenoate + reduced [NADPH--hemoprotein reductase] + O2 = 17-hydroxy-(5Z,8Z,11Z,14Z)-eicosatetraenoate + oxidized [NADPH--hemoprotein reductase] + H2O + H(+). The catalysed reaction is (5Z,8Z,11Z,14Z)-eicosatetraenoate + reduced [NADPH--hemoprotein reductase] + O2 = 18-hydroxy-(5Z,8Z,11Z,14Z)-eicosatetraenoate + oxidized [NADPH--hemoprotein reductase] + H2O + H(+). It carries out the reaction (5Z,8Z,11Z,14Z)-eicosatetraenoate + reduced [NADPH--hemoprotein reductase] + O2 = 19-hydroxy-(5Z,8Z,11Z,14Z)-eicosatetraenoate + oxidized [NADPH--hemoprotein reductase] + H2O + H(+). It catalyses the reaction (5Z,8Z,11Z,14Z,17Z)-eicosapentaenoate + reduced [NADPH--hemoprotein reductase] + O2 = 19-hydroxy-(5Z,8Z,11Z,14Z,17Z)-eicosapentaenoate + oxidized [NADPH--hemoprotein reductase] + H2O + H(+). The enzyme catalyses (5Z,8Z,11Z,14Z)-eicosatetraenoate + reduced [NADPH--hemoprotein reductase] + O2 = (8R,9S)-epoxy-(5Z,11Z,14Z)-eicosatrienoate + oxidized [NADPH--hemoprotein reductase] + H2O + H(+). The catalysed reaction is (5Z,8Z,11Z,14Z)-eicosatetraenoate + reduced [NADPH--hemoprotein reductase] + O2 = (11R,12S)-epoxy-(5Z,8Z,14Z)-eicosatrienoate + oxidized [NADPH--hemoprotein reductase] + H2O + H(+). It carries out the reaction (5Z,8Z,11Z,14Z)-eicosatetraenoate + reduced [NADPH--hemoprotein reductase] + O2 = (14S,15R)-epoxy-(5Z,8Z,11Z)-eicosatrienoate + oxidized [NADPH--hemoprotein reductase] + H2O + H(+). It catalyses the reaction (5Z,8Z,11Z,14Z)-eicosatetraenoate + reduced [NADPH--hemoprotein reductase] + O2 = (14R,15S)-epoxy-(5Z,8Z,11Z)-eicosatrienoate + oxidized [NADPH--hemoprotein reductase] + H2O + H(+). The enzyme catalyses (5Z,8Z,11Z,14Z,17Z)-eicosapentaenoate + reduced [NADPH--hemoprotein reductase] + O2 = (17R,18S)-epoxy-(5Z,8Z,11Z,14Z)-eicosatetraenoate + oxidized [NADPH--hemoprotein reductase] + H2O + H(+). The catalysed reaction is (4Z,7Z,10Z,13Z,16Z,19Z)-docosahexaenoate + reduced [NADPH--hemoprotein reductase] + O2 = (19S,20R)-epoxy-(4Z,7Z,10Z,13Z,16Z)-docosapentaenoate + oxidized [NADPH--hemoprotein reductase] + H2O + H(+). It carries out the reaction (4Z,7Z,10Z,13Z,16Z,19Z)-docosahexaenoate + reduced [NADPH--hemoprotein reductase] + O2 = (19R,20S)-epoxy-(4Z,7Z,10Z,13Z,16Z)-docosapentaenoate + oxidized [NADPH--hemoprotein reductase] + H2O + H(+). It catalyses the reaction all-trans-retinol + reduced [NADPH--hemoprotein reductase] + O2 = all-trans-retinal + oxidized [NADPH--hemoprotein reductase] + 2 H2O + H(+). The enzyme catalyses all-trans-retinal + reduced [NADPH--hemoprotein reductase] + O2 = all-trans-retinoate + oxidized [NADPH--hemoprotein reductase] + H2O + 2 H(+). The catalysed reaction is (13S)-hydroperoxy-(9Z,11E)-octadecadienoate = 13-oxo-(9Z,11E)-octadecadienoate + H2O. It carries out the reaction (12S)-hydroperoxy-(5Z,8Z,10E,14Z)-eicosatetraenoate = 12-oxo-(5Z,8Z,10E,14Z)-eicosatetraenoate + H2O. It catalyses the reaction (15S)-hydroperoxy-(5Z,8Z,11Z,13E)-eicosatetraenoate = 15-oxo-(5Z,8Z,11Z,13E)-eicosatetraenoate + H2O. The enzyme catalyses (5S)-hydroperoxy-(6E,8Z,11Z,14Z)-eicosatetraenoate = 5-oxo-(6E,8Z,11Z,14Z)-eicosatetraenoate + H2O. It participates in steroid hormone biosynthesis. The protein operates within lipid metabolism; fatty acid metabolism. Its pathway is cofactor metabolism; retinol metabolism. A cytochrome P450 monooxygenase involved in the metabolism of various endogenous substrates, including fatty acids, steroid hormones and vitamins. Mechanistically, uses molecular oxygen inserting one oxygen atom into a substrate, and reducing the second into a water molecule, with two electrons provided by NADPH via cytochrome P450 reductase (CPR; NADPH-ferrihemoprotein reductase). Catalyzes the hydroxylation of carbon-hydrogen bonds. Exhibits high catalytic activity for the formation of hydroxyestrogens from estrone (E1) and 17beta-estradiol (E2), namely 2-hydroxy E1 and E2, as well as D-ring hydroxylated E1 and E2 at the C15alpha and C16alpha positions. Displays different regioselectivities for polyunsaturated fatty acids (PUFA) hydroxylation. Catalyzes the epoxidation of double bonds of certain PUFA. Converts arachidonic acid toward epoxyeicosatrienoic acid (EET) regioisomers, 8,9-, 11,12-, and 14,15-EET, that function as lipid mediators in the vascular system. Displays an absolute stereoselectivity in the epoxidation of eicosapentaenoic acid (EPA) producing the 17(R),18(S) enantiomer. May play an important role in all-trans retinoic acid biosynthesis in extrahepatic tissues. Catalyzes two successive oxidative transformation of all-trans retinol to all-trans retinal and then to the active form all-trans retinoic acid. May also participate in eicosanoids metabolism by converting hydroperoxide species into oxo metabolites (lipoxygenase-like reaction, NADPH-independent). In Balaenoptera acutorostrata (Common minke whale), this protein is Cytochrome P450 1A1 (CYP1A1).